Reading from the N-terminus, the 492-residue chain is Peptidyl-prolyl cis-trans isomerase-like 4 (492 aa).

Positions 1–161 (MAVLLETTLG…QDIRINHTVI (161 aa)) constitute a PPIase cyclophilin-type domain. The tract at residues 167 to 188 (DDPPDLLIPDRSPEPTREQLDS) is disordered. Over residues 177-187 (RSPEPTREQLD) the composition is skewed to basic and acidic residues. Ser-178 carries the post-translational modification Phosphoserine. The residue at position 182 (Thr-182) is a Phosphothreonine. Residues Lys-201, Lys-212, and Lys-218 each participate in a glycyl lysine isopeptide (Lys-Gly) (interchain with G-Cter in SUMO2) cross-link. Residues 240–318 (NVLFVCKLNP…RRIHVDFSQS (79 aa)) form the RRM domain. Glycyl lysine isopeptide (Lys-Gly) (interchain with G-Cter in SUMO2) cross-links involve residues Lys-321 and Lys-362. 2 disordered regions span residues 368 to 406 (DEQA…PIKN) and 423 to 492 (EESC…SKYR). The span at 377–390 (SHSHTSKKHKKKTH) shows a compositional bias: basic residues. Ser-393 carries the phosphoserine modification. Residue Lys-405 forms a Glycyl lysine isopeptide (Lys-Gly) (interchain with G-Cter in SUMO2) linkage. The segment covering 426–452 (CWEKQKSEKRDRTQNRSRSRSRERDGH) has biased composition (basic and acidic residues). A Glycyl lysine isopeptide (Lys-Gly) (interchain with G-Cter in SUMO2) cross-link involves residue Lys-460. Ser-471 is modified (phosphoserine). The span at 482 to 492 (KSKDKEKSKYR) shows a compositional bias: basic and acidic residues.

It belongs to the cyclophilin-type PPIase family. PPIL4 subfamily. Abundantly expressed in kidney but has a ubiquitously low expression pattern in other adult tissues.

The protein resides in the nucleus. It catalyses the reaction [protein]-peptidylproline (omega=180) = [protein]-peptidylproline (omega=0). Functionally, PPIases accelerate the folding of proteins. It catalyzes the cis-trans isomerization of proline imidic peptide bonds in oligopeptides. The sequence is that of Peptidyl-prolyl cis-trans isomerase-like 4 (PPIL4) from Homo sapiens (Human).